The primary structure comprises 220 residues: Response regulator protein TmoT (220 aa).

A Response regulatory domain is found at V21 to L135. D70 is subject to 4-aspartylphosphate. One can recognise an HTH luxR-type domain in the interval L151–K216. Positions N175–H194 form a DNA-binding region, H-T-H motif.

Post-translationally, phosphorylated by TmoS.

The protein localises to the cytoplasm. Functionally, member of the two-component regulatory system TmoS/TmoT involved in the regulation of toluene degradation. Induces expression of tmoX operon. The sequence is that of Response regulator protein TmoT (tmoT) from Ectopseudomonas mendocina (Pseudomonas mendocina).